We begin with the raw amino-acid sequence, 386 residues long: WD repeat-containing protein 89 (386 aa).

6 WD repeats span residues 21-65 (KEPT…LLRE), 68-107 (GSPGLLSGVSFANSCDSVYSASTDGTVKCWDARGASEKPV), 112-156 (GYPS…QDLS), 167-207 (THSD…EEDA), 213-253 (NSVS…TDEP), and 318-357 (GHAATVRSFCWNVSEDSLLTGGEDAQLLLWKPGAMEKTFT).

The sequence is that of WD repeat-containing protein 89 (Wdr89) from Mus musculus (Mouse).